The chain runs to 141 residues: ATP synthase epsilon chain (141 aa).

It belongs to the ATPase epsilon chain family. F-type ATPases have 2 components, CF(1) - the catalytic core - and CF(0) - the membrane proton channel. CF(1) has five subunits: alpha(3), beta(3), gamma(1), delta(1), epsilon(1). CF(0) has three main subunits: a, b and c.

It is found in the cell inner membrane. Its function is as follows. Produces ATP from ADP in the presence of a proton gradient across the membrane. The sequence is that of ATP synthase epsilon chain from Burkholderia cenocepacia (strain ATCC BAA-245 / DSM 16553 / LMG 16656 / NCTC 13227 / J2315 / CF5610) (Burkholderia cepacia (strain J2315)).